A 486-amino-acid polypeptide reads, in one-letter code: LON peptidase N-terminal domain and RING finger protein C14F5.10c (486 aa).

An RING-type zinc finger spans residues 169 to 207 (CQICFGMLYDPVVSPCGHTFCGPCLMQALTQSPQCPTCR). The 223-residue stretch at 250–472 (ESWLPLFISM…LVLIWLTQLQ (223 aa)) folds into the Lon N-terminal domain.

This Schizosaccharomyces pombe (strain 972 / ATCC 24843) (Fission yeast) protein is LON peptidase N-terminal domain and RING finger protein C14F5.10c.